We begin with the raw amino-acid sequence, 70 residues long: uncharacterized protein (70 aa).

A helical membrane pass occupies residues 12 to 32; it reads VLFMNFFSVFVCTIGTLFLVF.

Its subcellular location is the membrane. This is an uncharacterized protein from Saccharomyces cerevisiae (strain ATCC 204508 / S288c) (Baker's yeast).